The primary structure comprises 280 residues: Tritrans,polycis-undecaprenyl-diphosphate synthase (geranylgeranyl-diphosphate specific) (280 aa).

The active site involves aspartate 57. Aspartate 57 lines the Mg(2+) pocket. Substrate-binding positions include 58–61 (GNRR), arginine 70, histidine 74, and 102–104 (STE). Asparagine 105 (proton acceptor) is an active-site residue. Substrate is bound by residues phenylalanine 106, arginine 108, arginine 229, and 235 to 237 (RIS). Glutamate 248 contacts Mg(2+).

It belongs to the UPP synthase family. Homodimer. It depends on Mg(2+) as a cofactor.

The catalysed reaction is geranylgeranyl diphosphate + 7 isopentenyl diphosphate = tri-trans,hepta-cis-undecaprenyl diphosphate + 7 diphosphate. Functionally, catalyzes the sequential condensation of isopentenyl diphosphate (IPP) with geranylgeranyl diphosphate (GGPP) to yield (2Z,6Z,10Z,14Z,18Z,22Z,26Z,30E,34E,38E)-undecaprenyl diphosphate (tritrans,heptacis-UPP). It is probably the precursor of glycosyl carrier lipids. This Methanocaldococcus jannaschii (strain ATCC 43067 / DSM 2661 / JAL-1 / JCM 10045 / NBRC 100440) (Methanococcus jannaschii) protein is Tritrans,polycis-undecaprenyl-diphosphate synthase (geranylgeranyl-diphosphate specific).